We begin with the raw amino-acid sequence, 64 residues long: Large ribosomal subunit protein uL29 (64 aa).

This sequence belongs to the universal ribosomal protein uL29 family.

This Verminephrobacter eiseniae (strain EF01-2) protein is Large ribosomal subunit protein uL29.